A 60-amino-acid polypeptide reads, in one-letter code: DNA gyrase inhibitor YacG (60 aa).

Zn(2+) is bound by residues C3, C6, C18, and C22. A disordered region spans residues 38-60; the sequence is PASSEDEEEPLDQEAETPVAPRH. Positions 41–52 are enriched in acidic residues; that stretch reads SEDEEEPLDQEA.

This sequence belongs to the DNA gyrase inhibitor YacG family. In terms of assembly, interacts with GyrB. Requires Zn(2+) as cofactor.

Inhibits all the catalytic activities of DNA gyrase by preventing its interaction with DNA. Acts by binding directly to the C-terminal domain of GyrB, which probably disrupts DNA binding by the gyrase. This is DNA gyrase inhibitor YacG from Ruegeria pomeroyi (strain ATCC 700808 / DSM 15171 / DSS-3) (Silicibacter pomeroyi).